The following is a 126-amino-acid chain: Histone H2B (126 aa).

Residues 1–12 (MPEPAKSAPAAK) show a composition bias toward low complexity. Residues 1–35 (MPEPAKSAPAAKKGSKKAVSKVQKKDGKKRRKSRK) are disordered. Lys-6 and Lys-13 each carry N6-acetyllysine. The residue at position 15 (Ser-15) is a Phosphoserine. N6-acetyllysine is present on residues Lys-16 and Lys-21. Ser-113 is a glycosylation site (O-linked (GlcNAc) serine). Residue Lys-121 forms a Glycyl lysine isopeptide (Lys-Gly) (interchain with G-Cter in ubiquitin) linkage.

The protein belongs to the histone H2B family. As to quaternary structure, the nucleosome is a histone octamer containing two molecules each of H2A, H2B, H3 and H4 assembled in one H3-H4 heterotetramer and two H2A-H2B heterodimers. The octamer wraps approximately 147 bp of DNA. Monoubiquitination of Lys-121 by BRE1 gives a specific tag for epigenetic transcriptional activation and is also prerequisite for histone H3 'Lys-4' and 'Lys-79' methylation. In terms of processing, phosphorylated on Ser-15 during apoptosis; which facilitates apoptotic chromatin condensation. Post-translationally, glcNAcylation at Ser-113 promotes monoubiquitination of Lys-121. It fluctuates in response to extracellular glucose, and associates with transcribed genes. In terms of tissue distribution, expressed by the skin granular glands.

It is found in the nucleus. It localises to the secreted. The protein resides in the chromosome. Core component of nucleosome. Nucleosomes wrap and compact DNA into chromatin, limiting DNA accessibility to the cellular machineries which require DNA as a template. Histones thereby play a central role in transcription regulation, DNA repair, DNA replication and chromosomal stability. DNA accessibility is regulated via a complex set of post-translational modifications of histones, also called histone code, and nucleosome remodeling. Functionally, has antibacterial activity against the Gram-negative bacteria E.coli and the Gram-positive bacteria S.aureus. The chain is Histone H2B from Zhangixalus schlegelii (Japanese gliding frog).